A 294-amino-acid chain; its full sequence is Cuticle collagen 144 (294 aa).

Residues methionine 1–threonine 30 form the signal peptide. Pro residues predominate over residues threonine 100–proline 112. Disordered regions lie at residues threonine 100–proline 134 and proline 148–alanine 278. Triple-helical region stretches follow at residues proline 102–aspartate 127 and glycine 153–proline 274. Low complexity-rich tracts occupy residues alanine 164 to aspartate 209 and alanine 219 to proline 265.

As to quaternary structure, collagen polypeptide chains are complexed within the cuticle by disulfide bonds and other types of covalent cross-links.

Functionally, nematode cuticles are composed largely of collagen-like proteins. The cuticle functions both as an exoskeleton and as a barrier to protect the worm from its environment. This chain is Cuticle collagen 144, found in Caenorhabditis briggsae.